The sequence spans 212 residues: uncharacterized protein (212 aa).

The protein belongs to the IIV-6 309L family.

This is an uncharacterized protein from Aedes vexans (Inland floodwater mosquito).